The primary structure comprises 247 residues: Type III pantothenate kinase (247 aa).

6–13 (DVGNTSIY) is an ATP binding site. Residue 102-105 (GADL) participates in substrate binding. Residue aspartate 104 is the Proton acceptor of the active site. Residue aspartate 122 coordinates K(+). Threonine 125 is an ATP binding site. A substrate-binding site is contributed by threonine 176.

It belongs to the type III pantothenate kinase family. As to quaternary structure, homodimer. It depends on NH4(+) as a cofactor. K(+) is required as a cofactor.

It is found in the cytoplasm. The catalysed reaction is (R)-pantothenate + ATP = (R)-4'-phosphopantothenate + ADP + H(+). The protein operates within cofactor biosynthesis; coenzyme A biosynthesis; CoA from (R)-pantothenate: step 1/5. Its function is as follows. Catalyzes the phosphorylation of pantothenate (Pan), the first step in CoA biosynthesis. In Acholeplasma laidlawii (strain PG-8A), this protein is Type III pantothenate kinase.